Here is a 135-residue protein sequence, read N- to C-terminus: Antennal-specific protein OS-C (135 aa).

The N-terminal stretch at 1–27 (MGFHMGRQLLLSGFLLVMLQMVTQTQA) is a signal peptide. The disordered stretch occupies residues 43–84 (VIKREGDDDGDDDDSSSEETVEDSEESRRRRREVNTDNTPSA). Residues 49 to 67 (DDDGDDDDSSSEETVEDSE) show a composition bias toward acidic residues.

In terms of tissue distribution, antenna. In the third antennal segment. Expressed in sencilla coeloconica.

This Drosophila melanogaster (Fruit fly) protein is Antennal-specific protein OS-C (Os-C).